We begin with the raw amino-acid sequence, 66 residues long: Large ribosomal subunit protein bL35 (66 aa).

It belongs to the bacterial ribosomal protein bL35 family.

In Thermodesulfovibrio yellowstonii (strain ATCC 51303 / DSM 11347 / YP87), this protein is Large ribosomal subunit protein bL35.